Consider the following 544-residue polypeptide: Prolyl 4-hydroxylase subunit alpha-3 (544 aa).

Residues 1–24 (MGPGARLAALLVLLKLGVGDPAAA) form the signal peptide. The TPR repeat unit spans residues 227–260 (EDALDYLAFACYQVGNVSCALSLSREFLVYSPDN). N242 carries N-linked (GlcNAc...) asparagine glycosylation. One can recognise a Fe2OG dioxygenase domain in the interval 422 to 529 (YAEYLQVVNY…KWVANKWIHE (108 aa)). Fe cation contacts are provided by H440 and D442. An N-linked (GlcNAc...) asparagine glycan is attached at N482. Position 510 (H510) interacts with Fe cation. A 2-oxoglutarate-binding site is contributed by K520.

The protein belongs to the P4HA family. As to quaternary structure, heterotetramer of two alpha-3 chains and two beta chains (the beta chain is the multi-functional PDI). It depends on Fe(2+) as a cofactor. L-ascorbate serves as cofactor. Post-translationally, N-glycosylation plays no role in the catalytic activity.

It localises to the endoplasmic reticulum lumen. It catalyses the reaction L-prolyl-[collagen] + 2-oxoglutarate + O2 = trans-4-hydroxy-L-prolyl-[collagen] + succinate + CO2. Catalyzes the post-translational formation of 4-hydroxyproline in -Xaa-Pro-Gly- sequences in collagens and other proteins. This is Prolyl 4-hydroxylase subunit alpha-3 (P4ha3) from Rattus norvegicus (Rat).